The sequence spans 160 residues: Transcription antitermination protein NusB (160 aa).

The protein belongs to the NusB family.

Functionally, involved in transcription antitermination. Required for transcription of ribosomal RNA (rRNA) genes. Binds specifically to the boxA antiterminator sequence of the ribosomal RNA (rrn) operons. This Rhizobium meliloti (strain 1021) (Ensifer meliloti) protein is Transcription antitermination protein NusB.